Reading from the N-terminus, the 1393-residue chain is DNA-directed RNA polymerase subunit beta' (1393 aa).

Zn(2+)-binding residues include cysteine 70, cysteine 72, cysteine 85, and cysteine 88. Mg(2+) is bound by residues aspartate 461, aspartate 463, and aspartate 465. Zn(2+)-binding residues include cysteine 804, cysteine 877, cysteine 884, and cysteine 887.

Belongs to the RNA polymerase beta' chain family. As to quaternary structure, the RNAP catalytic core consists of 2 alpha, 1 beta, 1 beta' and 1 omega subunit. When a sigma factor is associated with the core the holoenzyme is formed, which can initiate transcription. The cofactor is Mg(2+). Requires Zn(2+) as cofactor.

It carries out the reaction RNA(n) + a ribonucleoside 5'-triphosphate = RNA(n+1) + diphosphate. In terms of biological role, DNA-dependent RNA polymerase catalyzes the transcription of DNA into RNA using the four ribonucleoside triphosphates as substrates. In Rhodospirillum rubrum (strain ATCC 11170 / ATH 1.1.1 / DSM 467 / LMG 4362 / NCIMB 8255 / S1), this protein is DNA-directed RNA polymerase subunit beta'.